We begin with the raw amino-acid sequence, 620 residues long: Glutathione-regulated potassium-efflux system protein KefC (620 aa).

Helical transmembrane passes span 4-24 (HTLIQALIYLGSAALIVPIAV), 26-46 (LGLGSVLGYLIAGCIIGPWGL), 54-74 (SILHFAEIGVVLMLFIIGLEL), 90-110 (GALQMVICGGLLGLFCMLLGL), 114-134 (VAELIGMTLALSSTAIAMQAM), 149-169 (FAVLLFQDIAAIPLVAMIPLL), 178-198 (MGAFVLSALKVAGALALVVLL), 218-238 (VFSAVALFLVFGFGLLLEEVG), 270-290 (GLLLGLFFIGVGMSIDFGTLI), 294-314 (LRIVILLLGFLIIKIAMLWLI), 327-347 (WFAVLLGQGSEFAFVVFGAAQ), and 359-379 (SLTLAVALSMAATPILLVILN). The RCK N-terminal domain maps to 399 to 518 (QPRVIIAGFG…AGVEKPERET (120 aa)). A disordered region spans residues 597–620 (GWQGTEEGKHTGNMADEPETKPSS).

Belongs to the monovalent cation:proton antiporter 2 (CPA2) transporter (TC 2.A.37) family. KefC subfamily. Homodimer. Interacts with the regulatory subunit KefF.

It is found in the cell inner membrane. Functionally, pore-forming subunit of a potassium efflux system that confers protection against electrophiles. Catalyzes K(+)/H(+) antiport. The polypeptide is Glutathione-regulated potassium-efflux system protein KefC (Escherichia coli O45:K1 (strain S88 / ExPEC)).